The primary structure comprises 114 residues: UPF0339 protein plu2779 (114 aa).

Tandem repeats lie at residues 11–59 (TKNK…NFEI) and 62–110 (NKSG…VRDL).

The protein belongs to the UPF0339 family. Duplicated subfamily.

In Photorhabdus laumondii subsp. laumondii (strain DSM 15139 / CIP 105565 / TT01) (Photorhabdus luminescens subsp. laumondii), this protein is UPF0339 protein plu2779.